A 212-amino-acid polypeptide reads, in one-letter code: Pyridoxine/pyridoxamine 5'-phosphate oxidase (212 aa).

Residues 8–11 (RREY) and lysine 66 each bind substrate. FMN-binding positions include 61 to 66 (RIVLLK), 76 to 77 (FT), arginine 82, lysine 83, and glutamine 105. Residues tyrosine 123, arginine 127, and serine 131 each coordinate substrate. FMN-binding positions include 140-141 (QS) and tryptophan 185. 191-193 (RLH) is a binding site for substrate. Arginine 195 serves as a coordination point for FMN.

It belongs to the pyridoxamine 5'-phosphate oxidase family. In terms of assembly, homodimer. FMN serves as cofactor.

The enzyme catalyses pyridoxamine 5'-phosphate + O2 + H2O = pyridoxal 5'-phosphate + H2O2 + NH4(+). It carries out the reaction pyridoxine 5'-phosphate + O2 = pyridoxal 5'-phosphate + H2O2. It functions in the pathway cofactor metabolism; pyridoxal 5'-phosphate salvage; pyridoxal 5'-phosphate from pyridoxamine 5'-phosphate: step 1/1. It participates in cofactor metabolism; pyridoxal 5'-phosphate salvage; pyridoxal 5'-phosphate from pyridoxine 5'-phosphate: step 1/1. Its function is as follows. Catalyzes the oxidation of either pyridoxine 5'-phosphate (PNP) or pyridoxamine 5'-phosphate (PMP) into pyridoxal 5'-phosphate (PLP). The sequence is that of Pyridoxine/pyridoxamine 5'-phosphate oxidase from Shewanella baltica (strain OS223).